Here is a 54-residue protein sequence, read N- to C-terminus: Photosystem II reaction center protein K (54 aa).

A propeptide spanning residues 1–17 (MSFENFAIITLKENVFA) is cleaved from the precursor. A helical membrane pass occupies residues 33–53 (LPIIPVLFLLLAFVWQSAVKF).

The protein belongs to the PsbK family. In terms of assembly, PSII is composed of 1 copy each of membrane proteins PsbA, PsbB, PsbC, PsbD, PsbE, PsbF, PsbH, PsbI, PsbJ, PsbK, PsbL, PsbM, PsbT, PsbY, PsbZ, Psb30/Ycf12, at least 3 peripheral proteins of the oxygen-evolving complex and a large number of cofactors. It forms dimeric complexes.

The protein localises to the plastid. It is found in the chloroplast thylakoid membrane. Its function is as follows. One of the components of the core complex of photosystem II (PSII). PSII is a light-driven water:plastoquinone oxidoreductase that uses light energy to abstract electrons from H(2)O, generating O(2) and a proton gradient subsequently used for ATP formation. It consists of a core antenna complex that captures photons, and an electron transfer chain that converts photonic excitation into a charge separation. In Euglena deses, this protein is Photosystem II reaction center protein K.